The chain runs to 276 residues: Large ribosomal subunit protein uL2 (276 aa).

Positions 224 to 276 are disordered; that stretch reads VMNPVDHPHGGGEGKAPIGRKSPMTPWGKPTLGYKTRKKKNKSDKFIIRRRKK. Residues 258 to 276 show a composition bias toward basic residues; the sequence is KTRKKKNKSDKFIIRRRKK.

This sequence belongs to the universal ribosomal protein uL2 family. Part of the 50S ribosomal subunit. Forms a bridge to the 30S subunit in the 70S ribosome.

Its function is as follows. One of the primary rRNA binding proteins. Required for association of the 30S and 50S subunits to form the 70S ribosome, for tRNA binding and peptide bond formation. It has been suggested to have peptidyltransferase activity; this is somewhat controversial. Makes several contacts with the 16S rRNA in the 70S ribosome. The protein is Large ribosomal subunit protein uL2 of Geobacillus stearothermophilus (Bacillus stearothermophilus).